Consider the following 201-residue polypeptide: Dephospho-CoA kinase (201 aa).

The DPCK domain maps to 4–201 (AFFVTASIAC…VIQEISKGNM (198 aa)). 12-17 (ACGKST) contributes to the ATP binding site.

Belongs to the CoaE family.

The protein resides in the cytoplasm. The catalysed reaction is 3'-dephospho-CoA + ATP = ADP + CoA + H(+). Its pathway is cofactor biosynthesis; coenzyme A biosynthesis; CoA from (R)-pantothenate: step 5/5. Catalyzes the phosphorylation of the 3'-hydroxyl group of dephosphocoenzyme A to form coenzyme A. The protein is Dephospho-CoA kinase of Campylobacter jejuni subsp. jejuni serotype O:2 (strain ATCC 700819 / NCTC 11168).